We begin with the raw amino-acid sequence, 322 residues long: Prephenate dehydratase (322 aa).

Positions 5 to 191 (RIAYLGPEGT…ARTRFVLVGM (187 aa)) constitute a Prephenate dehydratase domain. The ACT domain occupies 205–282 (SAVLRIDNAP…ADVCYLGSWP (78 aa)). The interval 286–322 (ATGPTVSPPPPDEASRWLARLRAGKPDQASEPGGGKL) is disordered.

As to quaternary structure, homodimer.

The catalysed reaction is prephenate + H(+) = 3-phenylpyruvate + CO2 + H2O. The protein operates within amino-acid biosynthesis; L-phenylalanine biosynthesis; phenylpyruvate from prephenate: step 1/1. The polypeptide is Prephenate dehydratase (pheA) (Mycobacterium leprae (strain Br4923)).